A 166-amino-acid chain; its full sequence is Large ribosomal subunit protein uL11 (166 aa).

Belongs to the universal ribosomal protein uL11 family.

The sequence is that of Large ribosomal subunit protein uL11 (rpl12) from Dictyostelium discoideum (Social amoeba).